The sequence spans 238 residues: Ribonuclease PH (238 aa).

Phosphate contacts are provided by residues R86 and G124–R126.

This sequence belongs to the RNase PH family. As to quaternary structure, homohexameric ring arranged as a trimer of dimers.

It carries out the reaction tRNA(n+1) + phosphate = tRNA(n) + a ribonucleoside 5'-diphosphate. Phosphorolytic 3'-5' exoribonuclease that plays an important role in tRNA 3'-end maturation. Removes nucleotide residues following the 3'-CCA terminus of tRNAs; can also add nucleotides to the ends of RNA molecules by using nucleoside diphosphates as substrates, but this may not be physiologically important. Probably plays a role in initiation of 16S rRNA degradation (leading to ribosome degradation) during starvation. The protein is Ribonuclease PH of Alkalilimnicola ehrlichii (strain ATCC BAA-1101 / DSM 17681 / MLHE-1).